The sequence spans 1342 residues: DNA-directed RNA polymerase subunit beta (1342 aa).

This sequence belongs to the RNA polymerase beta chain family. As to quaternary structure, the RNAP catalytic core consists of 2 alpha, 1 beta, 1 beta' and 1 omega subunit. When a sigma factor is associated with the core the holoenzyme is formed, which can initiate transcription.

The catalysed reaction is RNA(n) + a ribonucleoside 5'-triphosphate = RNA(n+1) + diphosphate. In terms of biological role, DNA-dependent RNA polymerase catalyzes the transcription of DNA into RNA using the four ribonucleoside triphosphates as substrates. This Mannheimia succiniciproducens (strain KCTC 0769BP / MBEL55E) protein is DNA-directed RNA polymerase subunit beta.